The chain runs to 263 residues: Endonuclease 8 (263 aa).

The active-site Schiff-base intermediate with DNA is the P2. The active-site Proton donor is the E3. K53 functions as the Proton donor; for beta-elimination activity in the catalytic mechanism. 3 residues coordinate DNA: Q70, R125, and N169. Residues 229-263 form an FPG-type zinc finger; sequence KVFHRDGEPCERCGGIIEKTTLSSRPFYWCPGCQH. R253 (proton donor; for delta-elimination activity) is an active-site residue.

This sequence belongs to the FPG family. The cofactor is Zn(2+).

It carries out the reaction 2'-deoxyribonucleotide-(2'-deoxyribose 5'-phosphate)-2'-deoxyribonucleotide-DNA = a 3'-end 2'-deoxyribonucleotide-(2,3-dehydro-2,3-deoxyribose 5'-phosphate)-DNA + a 5'-end 5'-phospho-2'-deoxyribonucleoside-DNA + H(+). Functionally, involved in base excision repair of DNA damaged by oxidation or by mutagenic agents. Acts as a DNA glycosylase that recognizes and removes damaged bases. Has a preference for oxidized pyrimidines, such as thymine glycol, 5,6-dihydrouracil and 5,6-dihydrothymine. Has AP (apurinic/apyrimidinic) lyase activity and introduces nicks in the DNA strand. Cleaves the DNA backbone by beta-delta elimination to generate a single-strand break at the site of the removed base with both 3'- and 5'-phosphates. The protein is Endonuclease 8 of Escherichia coli O6:K15:H31 (strain 536 / UPEC).